We begin with the raw amino-acid sequence, 240 residues long: MQAKIKNKRVLVKFSGEALAGDNQFGIDIHVLDHIAKEIKSLVENAIEVGIVIGGGNIIRGVSAAQGGIIRRTSGDYMGMLATVINAVAMQEALEHIGLDTRVQSAIEIKEICESYIYRKAIRHLEKGRVVIFGAGTGNPFFTTDTAATLRAIEIGSDLIIKATKVDGIYDKDPNKFKDAKKLDTLSYNDALIGDIEVMDDTAISLAKDNKLPIVVCNMFKKGNLLQVIKHQQGVFSMVK.

Residue 13–16 coordinates ATP; sequence KFSG. Residue Gly-55 coordinates UMP. Residues Gly-56 and Arg-60 each coordinate ATP. Residues Asp-76 and 137–144 each bind UMP; that span reads TGNPFFTT. Thr-164, Tyr-170, and Asp-173 together coordinate ATP.

Belongs to the UMP kinase family. As to quaternary structure, homohexamer.

It localises to the cytoplasm. The enzyme catalyses UMP + ATP = UDP + ADP. The protein operates within pyrimidine metabolism; CTP biosynthesis via de novo pathway; UDP from UMP (UMPK route): step 1/1. Its activity is regulated as follows. Inhibited by UTP. In terms of biological role, catalyzes the reversible phosphorylation of UMP to UDP. This Helicobacter pylori (strain HPAG1) protein is Uridylate kinase.